The sequence spans 190 residues: Putative resolvase R80 (190 aa).

Residues 11–30 (SSVLGVHQRTLYQWDKKGWI) constitute a DNA-binding region (H-T-H motif). The region spanning 61-190 (LSICYVRVSS…RNGSRKYSNK (130 aa)) is the Resolvase/invertase-type recombinase catalytic domain. A coiled-coil region spans residues 67–92 (RVSSNSQKDDLERQIKFMKKKYPNHT). Ser69 serves as the catalytic O-(5'-phospho-DNA)-serine intermediate.

Belongs to the site-specific recombinase resolvase family.

Its function is as follows. Resolvase catalyzes the resolution (a site-specific recombination) of the cointegrated replicon to yield the final transposition products. The chain is Putative resolvase R80 from Acanthamoeba polyphaga mimivirus (APMV).